A 516-amino-acid polypeptide reads, in one-letter code: uncharacterized protein (516 aa).

PFTB repeat units lie at residues 45 to 86 (RQDA…QRAD) and 401 to 443 (DERA…DGSE).

This is an uncharacterized protein from Sinorhizobium fredii (strain NBRC 101917 / NGR234).